A 441-amino-acid polypeptide reads, in one-letter code: MSKPVVAIVGRPNVGKSTLFNRLAGGLVAIVENRPGVTRDRLYRDSEWLGRKFTIIDTGGIEFVNENTSISAQMRRQAEIAIEEADVIVFVIDAQISPTPDDDMIAQTLRRSGKPVILAANKVENFAKTELYEFYNLGLGEPVPISAVHGMNIGDLLDEVVSHFPEDIEEEVDPDTIRIAVVGRPNVGKSSLVNTLLGEERVIVSNIPGTTRDAIDSAFEHEGKHYIIIDTAGMRRKGRIEELTEQYSVSRSLRAVDRSDVILMLLDAGEGVTEQDKKIAGYAHEAGKGIVLVVNKWDLIEKDDKTMNRFEKDIREELGFMQYAPTLFISAKTGQRVTKLLDLVDFVAEQNSTRVATATLNTLVREWVHLNPPPTDKGRRLKVLYATQVGVKPPTFVFFVNDHELMHFSYRRYLENQLRSSFGFEGSPIRMIVRQKDEERE.

EngA-type G domains lie at 4 to 168 and 177 to 352; these read PVVA…PEDI and IRIA…EQNS. GTP-binding positions include 10 to 17, 57 to 61, 121 to 124, 183 to 190, 230 to 234, and 295 to 298; these read GRPNVGKS, DTGGI, NKVE, DTAGM, and NKWD. In terms of domain architecture, KH-like spans 353 to 437; sequence TRVATATLNT…PIRMIVRQKD (85 aa).

Belongs to the TRAFAC class TrmE-Era-EngA-EngB-Septin-like GTPase superfamily. EngA (Der) GTPase family. In terms of assembly, associates with the 50S ribosomal subunit.

In terms of biological role, GTPase that plays an essential role in the late steps of ribosome biogenesis. The protein is GTPase Der of Desulfitobacterium hafniense (strain DSM 10664 / DCB-2).